Reading from the N-terminus, the 388-residue chain is Proline-rich protein 5 (388 aa).

2 interaction with RICTOR regions span residues 10 to 95 and 188 to 218; these read MSSP…LTKG and HESR…YGLH. The disordered stretch occupies residues 12–31; it reads SPSLSDLGKREPAAAADERG. The segment covering 18–31 has biased composition (basic and acidic residues); sequence LGKREPAAAADERG. Position 252 is a phosphoserine (Ser252). Positions 254 to 388 are disordered; it reads SYNTPLLNPV…EGSGGRQSVV (135 aa). Over residues 336–346 the composition is skewed to polar residues; the sequence is TRSSLPRSSPE.

This sequence belongs to the PROTOR family. In terms of assembly, associated component of the mechanistic target of rapamycin complex 2 (mTORC2). Binds directly to MTOR and RICTOR within the TORC2 complex. Most abundant in kidney and liver. Also highly expressed in brain, spleen, testis and placenta. Overexpressed in several colorectal tumors.

In terms of biological role, associated subunit of mTORC2, which regulates cell growth and survival in response to hormonal signals. mTORC2 is activated by growth factors, but, in contrast to mTORC1, seems to be nutrient-insensitive. mTORC2 seems to function upstream of Rho GTPases to regulate the actin cytoskeleton, probably by activating one or more Rho-type guanine nucleotide exchange factors. PRR5 plays an important role in regulation of PDGFRB expression and in modulation of platelet-derived growth factor signaling. May act as a tumor suppressor in breast cancer. This chain is Proline-rich protein 5 (PRR5), found in Homo sapiens (Human).